A 110-amino-acid chain; its full sequence is Large ribosomal subunit protein uL22 (110 aa).

This sequence belongs to the universal ribosomal protein uL22 family. As to quaternary structure, part of the 50S ribosomal subunit.

This protein binds specifically to 23S rRNA; its binding is stimulated by other ribosomal proteins, e.g. L4, L17, and L20. It is important during the early stages of 50S assembly. It makes multiple contacts with different domains of the 23S rRNA in the assembled 50S subunit and ribosome. Its function is as follows. The globular domain of the protein is located near the polypeptide exit tunnel on the outside of the subunit, while an extended beta-hairpin is found that lines the wall of the exit tunnel in the center of the 70S ribosome. The protein is Large ribosomal subunit protein uL22 of Histophilus somni (strain 2336) (Haemophilus somnus).